Consider the following 140-residue polypeptide: Small ribosomal subunit protein uS9 (140 aa).

Belongs to the universal ribosomal protein uS9 family.

This chain is Small ribosomal subunit protein uS9, found in Desulfurococcus amylolyticus (strain DSM 18924 / JCM 16383 / VKM B-2413 / 1221n) (Desulfurococcus kamchatkensis).